A 148-amino-acid polypeptide reads, in one-letter code: Snaclec 4 (148 aa).

The signal sequence occupies residues 1–23 (MGRFIFVSFSLLVVFFSLSGTEA). The region spanning 34-148 (YDQNCYKAFE…DTQFRLQEPG (115 aa)) is the C-type lectin domain.

It belongs to the snaclec family. In terms of assembly, heterodimer; disulfide-linked. In terms of processing, contains disulfide bonds. Expressed by the venom gland.

It localises to the secreted. In terms of biological role, interferes with one step of hemostasis (modulation of platelet aggregation, or coagulation cascade, for example). The chain is Snaclec 4 from Echis pyramidum leakeyi (Leakey's carpet viper).